The sequence spans 352 residues: Deoxyhypusine synthase-like protein (352 aa).

The protein belongs to the deoxyhypusine synthase family.

This Coxiella burnetii (strain Dugway 5J108-111) protein is Deoxyhypusine synthase-like protein.